A 407-amino-acid chain; its full sequence is Serine/threonine transporter SstT (407 aa).

Helical transmembrane passes span 12-32, 42-62, 81-101, 141-161, 179-199, 218-238, 245-267, 288-308, and 330-350; these read GNLIVQICIGIALGILIGISS, LGILFTSALKAIAPMLVFILI, IIILYIVGTFFASACAVLANF, ALSSGNYLGILTWAIAGGIAL, VLKIVKFVVKLAPFGIFGLVA, ILLVATMLFVTFVINALIVFF, FPLIFICLRHSAFFAFFTRSSAA, ISIPLGATINMAGAAVTIAIL, and IIATFAACGASGVAGGSLLLI.

It belongs to the dicarboxylate/amino acid:cation symporter (DAACS) (TC 2.A.23) family.

It localises to the cell inner membrane. It catalyses the reaction L-serine(in) + Na(+)(in) = L-serine(out) + Na(+)(out). The catalysed reaction is L-threonine(in) + Na(+)(in) = L-threonine(out) + Na(+)(out). Functionally, involved in the import of serine and threonine into the cell, with the concomitant import of sodium (symport system). This Campylobacter jejuni subsp. jejuni serotype O:2 (strain ATCC 700819 / NCTC 11168) protein is Serine/threonine transporter SstT.